We begin with the raw amino-acid sequence, 543 residues long: Mitochondrial distribution and morphology protein 34 (543 aa).

Positions 1 to 202 constitute an SMP-LTD domain; the sequence is MSFNVNWNSL…LPTLLHKVSL (202 aa). The tract at residues 519 to 543 is disordered; sequence AFSHNDPSITPFELPPPPYHQLSRA.

The protein belongs to the MDM34 family. As to quaternary structure, component of the ER-mitochondria encounter structure (ERMES) or MDM complex, composed of MMM1, MDM10, MDM12 and MDM34.

It localises to the mitochondrion outer membrane. In terms of biological role, component of the ERMES/MDM complex, which serves as a molecular tether to connect the endoplasmic reticulum (ER) and mitochondria. Components of this complex are involved in the control of mitochondrial shape and protein biogenesis, and function in nonvesicular lipid trafficking between the ER and mitochondria. MDM34 is required for the interaction of the ER-resident membrane protein MMM1 and the outer mitochondrial membrane-resident beta-barrel protein MDM10. This Clavispora lusitaniae (strain ATCC 42720) (Yeast) protein is Mitochondrial distribution and morphology protein 34.